The following is a 1522-amino-acid chain: Paired amphipathic helix protein pst1 (1522 aa).

Residues 139–174 (TILSSTDSNIPRPGTVKSSASPFVPNQNPSAPPPPP) form a disordered region. The region spanning 178–248 (RQLNVTDALS…QGFNTFLPPG (71 aa)) is the PAH 1 domain. The disordered stretch occupies residues 307-339 (QSSASHPVLQPPAPSTLQFNPSPSPAAPSYPPV). Residues 328 to 337 (SPSPAAPSYP) are compositionally biased toward pro residues. The PAH 2 domain occupies 345–415 (QAADLDQAIN…EEFKRFLPDV (71 aa)). Disordered regions lie at residues 422–504 (ETQD…AFNV), 928–968 (AREN…DESS), and 1343–1522 (SGKA…KDDL). Residues 426-441 (KSTVVPQESATATPKR) show a composition bias toward polar residues. Phosphoserine is present on Ser442. Low complexity predominate over residues 442–468 (SPSATPTSALPPIGKFAPPTTAKAQPA). Thr446 is modified (phosphothreonine). The PAH 3 domain occupies 504–576 (VPIAQNKNPS…NWLKDLVKYN (73 aa)). Positions 928–960 (ARENRSSVKEDYVSESTERTPDASEIDEHISEH) are enriched in basic and acidic residues. Residues 1385-1398 (GKSSVTRGNKTNLK) are compositionally biased toward polar residues. The segment covering 1403-1432 (RNNDDSSNKINLSEKEKEKESIEDEEKNRE) has biased composition (basic and acidic residues). Ser1443 carries the post-translational modification Phosphoserine. A compositionally biased stretch (basic and acidic residues) spans 1461-1474 (TSSHRPERSSEKKS). Residues 1478–1487 (VFTSVKQTAE) are compositionally biased toward polar residues. A compositionally biased stretch (acidic residues) spans 1488 to 1522 (NDADNEDDKTDMDDQTEETLDADNTMEEEPSKDDL).

The protein resides in the nucleus. Functionally, has a role in modulating the nuclear import of TF1 virus-like particles. Essential for viability. This Schizosaccharomyces pombe (strain 972 / ATCC 24843) (Fission yeast) protein is Paired amphipathic helix protein pst1 (pst1).